The following is a 377-amino-acid chain: Trichodiene synthase (377 aa).

The protein belongs to the trichodiene synthase family.

It catalyses the reaction (2E,6E)-farnesyl diphosphate = trichodiene + diphosphate. It participates in sesquiterpene biosynthesis; trichothecene biosynthesis. Its function is as follows. TS is a member of the terpene cyclase group of enzymes. It catalyzes the isomerization and cyclization of farnesyl pyro-phosphate to form trichodiene, the first cyclic intermediate in the biosynthetic pathway for trichothecenes. It serves to branch trichothecene biosynthesis from the isoprenoid pathway. In Fusarium poae, this protein is Trichodiene synthase (TRI5).